Here is a 256-residue protein sequence, read N- to C-terminus: Probable hydroxyacylglutathione hydrolase glo2 (256 aa).

The Zn(2+) site is built by H63, H65, D67, H68, H118, and D139. Substrate is bound by residues R148, 178-180, and 250-253; these read HEY and RDMK. H178 provides a ligand contact to Zn(2+).

Belongs to the metallo-beta-lactamase superfamily. Glyoxalase II family. Requires Zn(2+) as cofactor.

The protein resides in the cytoplasm. The protein localises to the nucleus. The catalysed reaction is an S-(2-hydroxyacyl)glutathione + H2O = a 2-hydroxy carboxylate + glutathione + H(+). It catalyses the reaction (R)-S-lactoylglutathione + H2O = (R)-lactate + glutathione + H(+). The protein operates within secondary metabolite metabolism; methylglyoxal degradation; (R)-lactate from methylglyoxal: step 2/2. Functionally, thiolesterase that catalyzes the hydrolysis of S-D-lactoylglutathione to form glutathione and D-lactic acid. Involved in the metabolism of methylglyoxal, a toxic compound for yeast proliferation, by converting methylglyoxal to lactate via S-D-lactoylglutathione by sequential enzyme reactions catalyzed by glyoxalase I and glyoxalase II. The sequence is that of Probable hydroxyacylglutathione hydrolase glo2 (glo2) from Schizosaccharomyces pombe (strain 972 / ATCC 24843) (Fission yeast).